Consider the following 235-residue polypeptide: PRA1 family protein 1 (235 aa).

Positions 1–17 are enriched in polar residues; that stretch reads MESNSNSNETMYGNPNI. The tract at residues 1–55 is disordered; that stretch reads MESNSNSNETMYGNPNINMGFVDSGNSNIGNNTGSMSPPPQQQQQPQQASSTPAG. Over residues 24–48 the composition is skewed to low complexity; the sequence is SGNSNIGNNTGSMSPPPQQQQQPQQ. 2 helical membrane passes run 144 to 164 and 187 to 207; these read SVFFIITNPFYLLLLGVLLFI and AFLSIYFLLYAGSSIFWLVGA.

Belongs to the PRA1 family.

The protein localises to the membrane. Functionally, may act as a general Rab protein regulator. This Dictyostelium discoideum (Social amoeba) protein is PRA1 family protein 1 (prafA).